The primary structure comprises 73 residues: Plasticin-A1 (73 aa).

The N-terminal stretch at 1–22 (MAFLKKSLFLVLFLAIVPLSIC) is a signal peptide. Positions 23–42 (EEEKREEENEEKQEDDDQSE) are excised as a propeptide. A disordered region spans residues 25–45 (EKREEENEEKQEDDDQSEKRG). Residues 30-40 (ENEEKQEDDDQ) are compositionally biased toward acidic residues. Gly-70 carries the glycine amide modification. Residues 72-73 (ES) constitute a propeptide that is removed on maturation.

The protein belongs to the frog skin active peptide (FSAP) family. Plasticin subfamily. In terms of tissue distribution, expressed by the skin glands.

It is found in the secreted. Its subcellular location is the target cell membrane. In terms of biological role, peptide with no antimicrobial activity. May act in synergy with cationic peptides by enhancing their activity. Has a moderate hemolytic activity. In Agalychnis annae (Blue-sided leaf frog), this protein is Plasticin-A1.